The following is a 225-amino-acid chain: NAD(P)H-quinone oxidoreductase subunit K, chloroplastic (225 aa).

4 residues coordinate [4Fe-4S] cluster: cysteine 43, cysteine 44, cysteine 108, and cysteine 139.

Belongs to the complex I 20 kDa subunit family. NDH is composed of at least 16 different subunits, 5 of which are encoded in the nucleus. Requires [4Fe-4S] cluster as cofactor.

The protein resides in the plastid. The protein localises to the chloroplast thylakoid membrane. The enzyme catalyses a plastoquinone + NADH + (n+1) H(+)(in) = a plastoquinol + NAD(+) + n H(+)(out). It carries out the reaction a plastoquinone + NADPH + (n+1) H(+)(in) = a plastoquinol + NADP(+) + n H(+)(out). Functionally, NDH shuttles electrons from NAD(P)H:plastoquinone, via FMN and iron-sulfur (Fe-S) centers, to quinones in the photosynthetic chain and possibly in a chloroplast respiratory chain. The immediate electron acceptor for the enzyme in this species is believed to be plastoquinone. Couples the redox reaction to proton translocation, and thus conserves the redox energy in a proton gradient. This chain is NAD(P)H-quinone oxidoreductase subunit K, chloroplastic, found in Vitis vinifera (Grape).